The following is a 363-amino-acid chain: tRNA N6-adenosine threonylcarbamoyltransferase (363 aa).

Residues His138, His142, and Tyr159 each coordinate Fe cation. Substrate-binding positions include 159–163 (YVSGG), Asp191, Asp212, and Ser295. Residue Asp323 coordinates Fe cation.

The protein belongs to the KAE1 / TsaD family. Requires Fe(2+) as cofactor.

It is found in the cytoplasm. The enzyme catalyses L-threonylcarbamoyladenylate + adenosine(37) in tRNA = N(6)-L-threonylcarbamoyladenosine(37) in tRNA + AMP + H(+). Functionally, required for the formation of a threonylcarbamoyl group on adenosine at position 37 (t(6)A37) in tRNAs that read codons beginning with adenine. Is probably involved in the transfer of the threonylcarbamoyl moiety of threonylcarbamoyl-AMP (TC-AMP) to the N6 group of A37. This chain is tRNA N6-adenosine threonylcarbamoyltransferase, found in Hyperthermus butylicus (strain DSM 5456 / JCM 9403 / PLM1-5).